Consider the following 471-residue polypeptide: Glutamate--tRNA ligase (471 aa).

A 'HIGH' region motif is present at residues 9 to 19; it reads PSPTGYLHVGG. Cys-98, Cys-100, Cys-125, and His-127 together coordinate Zn(2+). Residues 237–241 carry the 'KMSKS' region motif; that stretch reads KLSKR. ATP is bound at residue Lys-240.

This sequence belongs to the class-I aminoacyl-tRNA synthetase family. Glutamate--tRNA ligase type 1 subfamily. Monomer. Requires Zn(2+) as cofactor.

Its subcellular location is the cytoplasm. It catalyses the reaction tRNA(Glu) + L-glutamate + ATP = L-glutamyl-tRNA(Glu) + AMP + diphosphate. In terms of biological role, catalyzes the attachment of glutamate to tRNA(Glu) in a two-step reaction: glutamate is first activated by ATP to form Glu-AMP and then transferred to the acceptor end of tRNA(Glu). The protein is Glutamate--tRNA ligase of Salmonella arizonae (strain ATCC BAA-731 / CDC346-86 / RSK2980).